Reading from the N-terminus, the 327-residue chain is MVREKVKVSTRTLQWKCVESRRDSKRLYYGRFILSPLMKGQADTIGIAMRRALLGEIEGTCITRAKSENIPHDYSNIVGIQESVHEILMNLNEIVLRSNLYGTRNALICVQGPGYITARDIILPPSVEIIDNTQHIATLTEPIDLCIGLKIERNRGYSLKMSNNFEDRSYPIDAVFMPVQNANHSIHSYGNGNEKQEILFLEIWTNGSLTPKEALHEASRNLINLFIPFLHVEEETFYLENNQHQVTLPLFPFHNRLVNLRKKKKELAFQYIFIDQLELPPRIYNCLKKSNIHTLLDLLNNSQEDLIKIEHFHIEDVKKILDILEKK.

Residues 1–233 (MVREKVKVST…NLFIPFLHVE (233 aa)) are alpha N-terminal domain (alpha-NTD). The tract at residues 267–327 (LAFQYIFIDQ…KKILDILEKK (61 aa)) is alpha C-terminal domain (alpha-CTD).

It belongs to the RNA polymerase alpha chain family. In terms of assembly, in plastids the minimal PEP RNA polymerase catalytic core is composed of four subunits: alpha, beta, beta', and beta''. When a (nuclear-encoded) sigma factor is associated with the core the holoenzyme is formed, which can initiate transcription.

It localises to the plastid. It is found in the chloroplast. The catalysed reaction is RNA(n) + a ribonucleoside 5'-triphosphate = RNA(n+1) + diphosphate. Its function is as follows. DNA-dependent RNA polymerase catalyzes the transcription of DNA into RNA using the four ribonucleoside triphosphates as substrates. The sequence is that of DNA-directed RNA polymerase subunit alpha from Nasturtium officinale (Watercress).